A 354-amino-acid polypeptide reads, in one-letter code: Uroporphyrinogen decarboxylase (354 aa).

Substrate-binding positions include 27–31, D77, Y154, S209, and H327; that span reads RQAGR.

The protein belongs to the uroporphyrinogen decarboxylase family. In terms of assembly, homodimer.

The protein localises to the cytoplasm. The enzyme catalyses uroporphyrinogen III + 4 H(+) = coproporphyrinogen III + 4 CO2. It functions in the pathway porphyrin-containing compound metabolism; protoporphyrin-IX biosynthesis; coproporphyrinogen-III from 5-aminolevulinate: step 4/4. Catalyzes the decarboxylation of four acetate groups of uroporphyrinogen-III to yield coproporphyrinogen-III. This is Uroporphyrinogen decarboxylase from Shewanella piezotolerans (strain WP3 / JCM 13877).